The chain runs to 112 residues: 2Fe-2S ferredoxin (112 aa).

Residues 5–107 (IKVTFIINDG…GIKVRIPATT (103 aa)) form the 2Fe-2S ferredoxin-type domain. 4 residues coordinate [2Fe-2S] cluster: C42, C48, C51, and C88.

This sequence belongs to the adrenodoxin/putidaredoxin family. Requires [2Fe-2S] cluster as cofactor.

Functionally, ferredoxin are iron-sulfur proteins that transfer electrons in a wide variety of metabolic reactions. The polypeptide is 2Fe-2S ferredoxin (fdxB) (Rickettsia conorii (strain ATCC VR-613 / Malish 7)).